We begin with the raw amino-acid sequence, 192 residues long: Ion-translocating oxidoreductase complex subunit A (192 aa).

Helical transmembrane passes span 5–25 (LLLL…FLGL), 39–59 (IGMS…SYLV), 65–85 (LPFD…AVVV), 102–122 (ALGI…VALL), 134–154 (AIYG…FSAM), and 171–191 (AIAM…TGLV).

It belongs to the NqrDE/RnfAE family. In terms of assembly, the complex is composed of six subunits: RnfA, RnfB, RnfC, RnfD, RnfE and RnfG.

Its subcellular location is the cell inner membrane. Its function is as follows. Part of a membrane-bound complex that couples electron transfer with translocation of ions across the membrane. The sequence is that of Ion-translocating oxidoreductase complex subunit A from Shewanella putrefaciens (strain CN-32 / ATCC BAA-453).